The primary structure comprises 299 residues: Putative ankyrin repeat protein R864 (299 aa).

7 ANK repeats span residues 78–107 (SLNK…NIES), 108–137 (NNNY…NIKS), 139–167 (NNRV…DIRS), 168–197 (NDDY…DIRS), 199–227 (YYYI…DIRA), 228–257 (YNNC…DIRN), and 258–287 (DNDY…DIKT).

The protein is Putative ankyrin repeat protein R864 of Acanthamoeba polyphaga mimivirus (APMV).